The primary structure comprises 271 residues: Tryptophan synthase alpha chain (271 aa).

Catalysis depends on proton acceptor residues Glu-49 and Asp-60.

Belongs to the TrpA family. As to quaternary structure, tetramer of two alpha and two beta chains.

It catalyses the reaction (1S,2R)-1-C-(indol-3-yl)glycerol 3-phosphate + L-serine = D-glyceraldehyde 3-phosphate + L-tryptophan + H2O. The protein operates within amino-acid biosynthesis; L-tryptophan biosynthesis; L-tryptophan from chorismate: step 5/5. Its function is as follows. The alpha subunit is responsible for the aldol cleavage of indoleglycerol phosphate to indole and glyceraldehyde 3-phosphate. In Burkholderia cenocepacia (strain HI2424), this protein is Tryptophan synthase alpha chain.